The following is a 143-amino-acid chain: Large ribosomal subunit protein uL11 (143 aa).

The protein belongs to the universal ribosomal protein uL11 family. In terms of assembly, part of the ribosomal stalk of the 50S ribosomal subunit. Interacts with L10 and the large rRNA to form the base of the stalk. L10 forms an elongated spine to which L12 dimers bind in a sequential fashion forming a multimeric L10(L12)X complex. One or more lysine residues are methylated.

Its function is as follows. Forms part of the ribosomal stalk which helps the ribosome interact with GTP-bound translation factors. This is Large ribosomal subunit protein uL11 from Sphingopyxis alaskensis (strain DSM 13593 / LMG 18877 / RB2256) (Sphingomonas alaskensis).